We begin with the raw amino-acid sequence, 375 residues long: Chaperone protein DnaJ (375 aa).

One can recognise a J domain in the interval 5-70; it reads DFYETLGVAK…QKRAAYDRYG (66 aa). Residues 136 to 214 form a CR-type zinc finger; that stretch reads GKTAQIRVPT…CHGQGRVTEE (79 aa). Zn(2+)-binding residues include Cys149, Cys152, Cys166, Cys169, Cys188, Cys191, Cys202, and Cys205. CXXCXGXG motif repeat units lie at residues 149–156, 166–173, 188–195, and 202–209; these read CDVCSGSG, CGTCQGSG, CPTCHGRG, and CPKCHGQG.

It belongs to the DnaJ family. As to quaternary structure, homodimer. Requires Zn(2+) as cofactor.

The protein resides in the cytoplasm. In terms of biological role, participates actively in the response to hyperosmotic and heat shock by preventing the aggregation of stress-denatured proteins and by disaggregating proteins, also in an autonomous, DnaK-independent fashion. Unfolded proteins bind initially to DnaJ; upon interaction with the DnaJ-bound protein, DnaK hydrolyzes its bound ATP, resulting in the formation of a stable complex. GrpE releases ADP from DnaK; ATP binding to DnaK triggers the release of the substrate protein, thus completing the reaction cycle. Several rounds of ATP-dependent interactions between DnaJ, DnaK and GrpE are required for fully efficient folding. Also involved, together with DnaK and GrpE, in the DNA replication of plasmids through activation of initiation proteins. In Rhizobium etli (strain CIAT 652), this protein is Chaperone protein DnaJ.